Here is a 206-residue protein sequence, read N- to C-terminus: Large ribosomal subunit protein uL4 (206 aa).

Residues Thr-60–Gly-84 form a disordered region. The span at Phe-64–Ser-76 shows a compositional bias: basic residues.

Belongs to the universal ribosomal protein uL4 family. As to quaternary structure, part of the 50S ribosomal subunit.

In terms of biological role, one of the primary rRNA binding proteins, this protein initially binds near the 5'-end of the 23S rRNA. It is important during the early stages of 50S assembly. It makes multiple contacts with different domains of the 23S rRNA in the assembled 50S subunit and ribosome. Its function is as follows. Forms part of the polypeptide exit tunnel. The chain is Large ribosomal subunit protein uL4 from Rhodospirillum rubrum (strain ATCC 11170 / ATH 1.1.1 / DSM 467 / LMG 4362 / NCIMB 8255 / S1).